The primary structure comprises 147 residues: UPF0047 protein sll1880 (147 aa).

This sequence belongs to the UPF0047 family.

This chain is UPF0047 protein sll1880, found in Synechocystis sp. (strain ATCC 27184 / PCC 6803 / Kazusa).